The primary structure comprises 375 residues: MTPILFVDRDGTLITEPADFQIDAYEKLRFVEGVIPAMLKLRDAGYQFVIVSNQDGLGSESYPQASFDGPNNLMLQIFASQGIVFREVLIDCSWPADNAPTRKPGVGLMVPYLQDRTIDWSRSAMVGDRITDIQFAQNLNIRGFQLRTEQFGGDWDWAGIAHELADAPRRAVVQRNTKETRIRVELDLDRVAEPHTATGLPFFDHMLEQIGKHGGFALDIRAEGDLHIDEHHTIEDTGLALGQALREALGDKRGIGRYGFDPVDSPWRVAGDTAQHGFTLPMDETIASAALDFSGRPYFVFDGDFKRERVGDMPTELVPHFFRSVCDASGLNLHLHVRGENDHHKVEGCFKALARALRQAIRREGTALPSTKGAL.

The segment at 1-168 (MTPILFVDRD…GIAHELADAP (168 aa)) is histidinol-phosphatase. Aspartate 8 acts as the Nucleophile in catalysis. Positions 8, 10, and 128 each coordinate Mg(2+). Aspartate 10 functions as the Proton donor in the catalytic mechanism. The interval 169–375 (RRAVVQRNTK…TALPSTKGAL (207 aa)) is imidazoleglycerol-phosphate dehydratase.

This sequence in the N-terminal section; belongs to the histidinol-phosphatase family. It in the C-terminal section; belongs to the imidazoleglycerol-phosphate dehydratase family. The cofactor is Mg(2+).

The protein resides in the cytoplasm. The catalysed reaction is D-erythro-1-(imidazol-4-yl)glycerol 3-phosphate = 3-(imidazol-4-yl)-2-oxopropyl phosphate + H2O. The enzyme catalyses L-histidinol phosphate + H2O = L-histidinol + phosphate. The protein operates within amino-acid biosynthesis; L-histidine biosynthesis; L-histidine from 5-phospho-alpha-D-ribose 1-diphosphate: step 6/9. It functions in the pathway amino-acid biosynthesis; L-histidine biosynthesis; L-histidine from 5-phospho-alpha-D-ribose 1-diphosphate: step 8/9. The protein is Histidine biosynthesis bifunctional protein HisB of Xanthomonas campestris pv. campestris (strain B100).